A 366-amino-acid chain; its full sequence is Ribosomal RNA small subunit methyltransferase H 1 (366 aa).

Residues 1–46 are disordered; it reads MADQNINKNEKVLTGQPTENQEPVHKRRERYKGTHPKTFKEKYKER. Basic residues predominate over residues 25–37; it reads HKRRERYKGTHPK. Residues 97 to 99, Asp117, Phe147, Asp166, and Gln173 contribute to the S-adenosyl-L-methionine site; that span reads GGH.

The protein belongs to the methyltransferase superfamily. RsmH family.

Its subcellular location is the cytoplasm. The enzyme catalyses cytidine(1402) in 16S rRNA + S-adenosyl-L-methionine = N(4)-methylcytidine(1402) in 16S rRNA + S-adenosyl-L-homocysteine + H(+). In terms of biological role, specifically methylates the N4 position of cytidine in position 1402 (C1402) of 16S rRNA. This chain is Ribosomal RNA small subunit methyltransferase H 1, found in Lachnoclostridium phytofermentans (strain ATCC 700394 / DSM 18823 / ISDg) (Clostridium phytofermentans).